The primary structure comprises 329 residues: Gut-specific cysteine proteinase (329 aa).

The signal sequence occupies residues 1–15 (MKFLILTALCAVTLA). Positions 16-84 (FVPINHQSAV…ATEQEVVLAS (69 aa)) are cleaved as a propeptide — activation peptide. Disulfide bonds link Cys-98/Cys-127, Cys-110/Cys-155, Cys-146/Cys-204, Cys-147/Cys-151, Cys-183/Cys-208, and Cys-191/Cys-196. The active site involves Cys-113. Residues His-275 and Asn-295 contribute to the active site.

Belongs to the peptidase C1 family. Larvae exhibit strong expression in gut cells and weak expression in hypodermal cells. Adults exhibit the reverse: strong expression in hypodermal cells and weaker expression in gut cells.

Thiol protease. Has a role as a digestive enzyme. In Caenorhabditis elegans, this protein is Gut-specific cysteine proteinase (cpr-1).